A 256-amino-acid polypeptide reads, in one-letter code: Chitinase 11 (256 aa).

Positions 1–22 (MRRLLPLAGATLLIAAAGGASG) are cleaved as a signal peptide. 2 cysteine pairs are disulfide-bonded: Cys-48–Cys-109 and Cys-214–Cys-247. Catalysis depends on Glu-91, which acts as the Proton donor.

Belongs to the glycosyl hydrolase 19 family. Chitinase class II subfamily. In terms of tissue distribution, expressed in leaves and at lower levels in roots, sheaths and meristems.

It carries out the reaction Random endo-hydrolysis of N-acetyl-beta-D-glucosaminide (1-&gt;4)-beta-linkages in chitin and chitodextrins.. This is Chitinase 11 (Cht11) from Oryza sativa subsp. japonica (Rice).